A 501-amino-acid polypeptide reads, in one-letter code: Cytoplasmic tRNA 2-thiolation protein 2 (501 aa).

Over residues 1–12 (MCEMSEEYRESA) the composition is skewed to basic and acidic residues. Disordered stretches follow at residues 1–23 (MCEMSEEYRESAPKGPPPPRLGT) and 192–214 (GVERQSQHCAQDPQSPTGPPTTA). Position 2 is an N-acetylcysteine (Cys2). A Phosphoserine modification is found at Ser492.

The protein belongs to the CTU2/NCS2 family. As to quaternary structure, component of a complex at least composed of URM1, CTU2/NCS2 and CTU1/ATPBD3.

The protein resides in the cytoplasm. The protein operates within tRNA modification; 5-methoxycarbonylmethyl-2-thiouridine-tRNA biosynthesis. Plays a central role in 2-thiolation of mcm(5)S(2)U at tRNA wobble positions of tRNA(Lys), tRNA(Glu) and tRNA(Gln). May act by forming a heterodimer with CTU1/ATPBD3 that ligates sulfur from thiocarboxylated URM1 onto the uridine of tRNAs at wobble position. The sequence is that of Cytoplasmic tRNA 2-thiolation protein 2 from Bos taurus (Bovine).